The chain runs to 247 residues: Segregation and condensation protein A (247 aa).

It belongs to the ScpA family. As to quaternary structure, component of a cohesin-like complex composed of ScpA, ScpB and the Smc homodimer, in which ScpA and ScpB bind to the head domain of Smc. The presence of the three proteins is required for the association of the complex with DNA.

The protein localises to the cytoplasm. Its function is as follows. Participates in chromosomal partition during cell division. May act via the formation of a condensin-like complex containing Smc and ScpB that pull DNA away from mid-cell into both cell halves. This Lactobacillus gasseri (strain ATCC 33323 / DSM 20243 / BCRC 14619 / CIP 102991 / JCM 1131 / KCTC 3163 / NCIMB 11718 / NCTC 13722 / AM63) protein is Segregation and condensation protein A.